The primary structure comprises 401 residues: Imidazolonepropionase (401 aa).

Fe(3+) contacts are provided by His70 and His72. Positions 70 and 72 each coordinate Zn(2+). Arg79, Tyr142, and His175 together coordinate 4-imidazolone-5-propanoate. Tyr142 contacts N-formimidoyl-L-glutamate. Position 238 (His238) interacts with Fe(3+). Position 238 (His238) interacts with Zn(2+). Gln241 serves as a coordination point for 4-imidazolone-5-propanoate. Asp313 lines the Fe(3+) pocket. Asp313 is a Zn(2+) binding site. The N-formimidoyl-L-glutamate site is built by Asn315 and Gly317. Thr318 lines the 4-imidazolone-5-propanoate pocket.

This sequence belongs to the metallo-dependent hydrolases superfamily. HutI family. Zn(2+) serves as cofactor. The cofactor is Fe(3+).

Its subcellular location is the cytoplasm. The enzyme catalyses 4-imidazolone-5-propanoate + H2O = N-formimidoyl-L-glutamate. The protein operates within amino-acid degradation; L-histidine degradation into L-glutamate; N-formimidoyl-L-glutamate from L-histidine: step 3/3. In terms of biological role, catalyzes the hydrolytic cleavage of the carbon-nitrogen bond in imidazolone-5-propanoate to yield N-formimidoyl-L-glutamate. It is the third step in the universal histidine degradation pathway. This chain is Imidazolonepropionase, found in Xanthomonas oryzae pv. oryzae (strain MAFF 311018).